Consider the following 357-residue polypeptide: tRNA N6-adenosine threonylcarbamoyltransferase (357 aa).

2 residues coordinate Fe cation: H115 and H119. Residues 137 to 141 (LASGG), D170, G183, and N281 each bind substrate. D309 contributes to the Fe cation binding site.

The protein belongs to the KAE1 / TsaD family. The cofactor is Fe(2+).

The protein resides in the cytoplasm. It carries out the reaction L-threonylcarbamoyladenylate + adenosine(37) in tRNA = N(6)-L-threonylcarbamoyladenosine(37) in tRNA + AMP + H(+). Functionally, required for the formation of a threonylcarbamoyl group on adenosine at position 37 (t(6)A37) in tRNAs that read codons beginning with adenine. Is involved in the transfer of the threonylcarbamoyl moiety of threonylcarbamoyl-AMP (TC-AMP) to the N6 group of A37, together with TsaE and TsaB. TsaD likely plays a direct catalytic role in this reaction. The chain is tRNA N6-adenosine threonylcarbamoyltransferase from Afipia carboxidovorans (strain ATCC 49405 / DSM 1227 / KCTC 32145 / OM5) (Oligotropha carboxidovorans).